Here is a 260-residue protein sequence, read N- to C-terminus: Global transcriptional regulator CodY (260 aa).

The segment at 1 to 159 (MPNLLQKTRK…SSTVVGIQLL (159 aa)) is GAF domain. The H-T-H motif DNA-binding region spans 207–226 (ASVIADRIGITRSVIVNALR).

The protein belongs to the CodY family.

The protein localises to the cytoplasm. In terms of biological role, DNA-binding global transcriptional regulator which is involved in the adaptive response to starvation and acts by directly or indirectly controlling the expression of numerous genes in response to nutrient availability. During rapid exponential growth, CodY is highly active and represses genes whose products allow adaptation to nutrient depletion. The polypeptide is Global transcriptional regulator CodY (Streptococcus equi subsp. zooepidemicus (strain MGCS10565)).